We begin with the raw amino-acid sequence, 105 residues long: Large ribosomal subunit protein uL18c (105 aa).

The protein belongs to the universal ribosomal protein uL18 family. As to quaternary structure, part of the 50S ribosomal subunit; contacts the 5S rRNA.

It is found in the plastid. Its subcellular location is the chloroplast. Binds 5S rRNA, forms part of the central protuberance of the 50S subunit. The chain is Large ribosomal subunit protein uL18c (rpl18) from Cyanidium caldarium (Red alga).